A 153-amino-acid polypeptide reads, in one-letter code: Ribosomal RNA large subunit methyltransferase H (153 aa).

S-adenosyl-L-methionine-binding positions include Leu-71, Gly-102, and 121 to 126 (LSRMTL).

Belongs to the RNA methyltransferase RlmH family. Homodimer.

Its subcellular location is the cytoplasm. It catalyses the reaction pseudouridine(1915) in 23S rRNA + S-adenosyl-L-methionine = N(3)-methylpseudouridine(1915) in 23S rRNA + S-adenosyl-L-homocysteine + H(+). Functionally, specifically methylates the pseudouridine at position 1915 (m3Psi1915) in 23S rRNA. The chain is Ribosomal RNA large subunit methyltransferase H from Anaeromyxobacter sp. (strain Fw109-5).